A 100-amino-acid chain; its full sequence is Urease subunit gamma (100 aa).

This sequence belongs to the urease gamma subunit family. As to quaternary structure, heterotrimer of UreA (gamma), UreB (beta) and UreC (alpha) subunits. Three heterotrimers associate to form the active enzyme.

The protein resides in the cytoplasm. The enzyme catalyses urea + 2 H2O + H(+) = hydrogencarbonate + 2 NH4(+). Its pathway is nitrogen metabolism; urea degradation; CO(2) and NH(3) from urea (urease route): step 1/1. This chain is Urease subunit gamma, found in Streptomyces griseus subsp. griseus (strain JCM 4626 / CBS 651.72 / NBRC 13350 / KCC S-0626 / ISP 5235).